The following is a 239-amino-acid chain: Aldehyde dehydrogenase, dimeric NADP-preferring (239 aa).

Cys-30 is a catalytic residue.

It belongs to the aldehyde dehydrogenase family. In terms of assembly, homodimer.

It is found in the cytoplasm. It catalyses the reaction an aldehyde + NAD(+) + H2O = a carboxylate + NADH + 2 H(+). It carries out the reaction octanal + NAD(+) + H2O = octanoate + NADH + 2 H(+). Functionally, ALDHs play a major role in the detoxification of alcohol-derived acetaldehyde. They are involved in the metabolism of corticosteroids, biogenic amines, neurotransmitters, and lipid peroxidation. Oxidizes medium and long chain aldehydes into non-toxic fatty acids. Preferentially oxidizes aromatic aldehyde substrates. Comprises about 50 percent of corneal epithelial soluble proteins. May play a role in preventing corneal damage caused by ultraviolet light. The polypeptide is Aldehyde dehydrogenase, dimeric NADP-preferring (ALDH3A1) (Bos taurus (Bovine)).